Reading from the N-terminus, the 142-residue chain is Regulator of ribonuclease activity B (142 aa).

Positions 117 to 142 are disordered; it reads PNADEDEYGEDGEFFDDEFADDDEKR.

This sequence belongs to the RraB family. In terms of assembly, interacts with the C-terminal region of Rne.

The protein resides in the cytoplasm. Globally modulates RNA abundance by binding to RNase E (Rne) and regulating its endonucleolytic activity. Can modulate Rne action in a substrate-dependent manner by altering the composition of the degradosome. The protein is Regulator of ribonuclease activity B of Actinobacillus succinogenes (strain ATCC 55618 / DSM 22257 / CCUG 43843 / 130Z).